A 344-amino-acid polypeptide reads, in one-letter code: Transmembrane protein 268 (344 aa).

The interval Met1–Pro31 is disordered. A compositionally biased stretch (low complexity) spans Gly14–Pro27. Transmembrane regions (helical) follow at residues Ala106–Phe126 and Ala133–Phe153. The interval Thr244–Thr266 is disordered. Over residues Glu247–Leu259 the composition is skewed to low complexity.

In terms of assembly, interacts with ITGAM; this interaction inhibits ITGAM degradation via the endosome-lysosome pathway. Interacts with ITGB4; this interaction prevents ITGB4 degradation.

It is found in the cell membrane. Functionally, stabilizes cell surface expression of ITGAM and participates in the adhesion and migration of phagocytes during bacterial clearance. This is Transmembrane protein 268 (TMEM268) from Bos taurus (Bovine).